Here is a 265-residue protein sequence, read N- to C-terminus: Glutamate racemase (265 aa).

Residues 9-10 (DS) and 41-42 (YG) each bind substrate. The active-site Proton donor/acceptor is cysteine 72. 73 to 74 (NT) is a substrate binding site. Cysteine 183 serves as the catalytic Proton donor/acceptor. Residue 184-185 (TH) participates in substrate binding.

The protein belongs to the aspartate/glutamate racemases family.

The enzyme catalyses L-glutamate = D-glutamate. It functions in the pathway cell wall biogenesis; peptidoglycan biosynthesis. Provides the (R)-glutamate required for cell wall biosynthesis. This is Glutamate racemase from Lysinibacillus sphaericus (Bacillus sphaericus).